Here is a 92-residue protein sequence, read N- to C-terminus: Small ribosomal subunit protein uS19c (92 aa).

The protein belongs to the universal ribosomal protein uS19 family.

It is found in the plastid. The protein resides in the chloroplast. Functionally, protein S19 forms a complex with S13 that binds strongly to the 16S ribosomal RNA. In Liriodendron tulipifera (Tuliptree), this protein is Small ribosomal subunit protein uS19c.